The primary structure comprises 701 residues: Capsid protein VP1 (701 aa).

The protein belongs to the caliciviridae capsid protein family. Homodimer. Homomultimer. Interacts with the minor capsid protein VP2. May bind to VP3 and Vpg proteins. Post-translationally, cleaved by the viral protease to produce mature capsid protein.

It localises to the virion. The protein localises to the host cytoplasm. Its function is as follows. Capsid protein self assembles to form an icosahedral capsid with a T=3 symmetry, about 38 nm in diameter, and consisting of 180 capsid proteins. A smaller form of capsid with a diameter of 23 nm might be capsid proteins assembled as icosahedron with T=1 symmetry. The capsid encapsulates the genomic RNA and is decorated with VP2 proteins. In Vesicular exanthema of swine virus serotype A48 (isolate Swine/United States/A48/1948) (VESV), this protein is Capsid protein VP1.